A 284-amino-acid chain; its full sequence is NAD kinase (284 aa).

The Proton acceptor role is filled by Asp60. Residues 60-61, 134-135, Arg145, Lys162, Asp164, 175-180, and Gln234 each bind NAD(+); these read DG, ND, and TAYSFS.

It belongs to the NAD kinase family. The cofactor is a divalent metal cation.

The protein localises to the cytoplasm. The enzyme catalyses NAD(+) + ATP = ADP + NADP(+) + H(+). Involved in the regulation of the intracellular balance of NAD and NADP, and is a key enzyme in the biosynthesis of NADP. Catalyzes specifically the phosphorylation on 2'-hydroxyl of the adenosine moiety of NAD to yield NADP. The chain is NAD kinase from Clostridium beijerinckii (strain ATCC 51743 / NCIMB 8052) (Clostridium acetobutylicum).